The primary structure comprises 236 residues: Small ribosomal subunit protein uS2c (236 aa).

This sequence belongs to the universal ribosomal protein uS2 family.

It localises to the plastid. The chain is Small ribosomal subunit protein uS2c (rps2) from Cuscuta exaltata (Tall dodder).